We begin with the raw amino-acid sequence, 396 residues long: L-lactate dehydrogenase (396 aa).

Positions methionine 1–glycine 380 constitute an FMN hydroxy acid dehydrogenase domain. Tyrosine 24 contacts substrate. Positions 106 and 127 each coordinate FMN. Tyrosine 129 is a substrate binding site. Threonine 155 is an FMN binding site. Arginine 164 is a binding site for substrate. FMN is bound at residue lysine 251. The Proton acceptor role is filled by histidine 275. Residue arginine 278 participates in substrate binding. Aspartate 306–arginine 330 contributes to the FMN binding site.

Belongs to the FMN-dependent alpha-hydroxy acid dehydrogenase family. FMN is required as a cofactor.

It is found in the cell inner membrane. The catalysed reaction is (S)-lactate + A = pyruvate + AH2. Catalyzes the conversion of L-lactate to pyruvate. Is coupled to the respiratory chain. In Salmonella schwarzengrund (strain CVM19633), this protein is L-lactate dehydrogenase.